The primary structure comprises 409 residues: Putative lipoate-protein ligase A (409 aa).

The 185-residue stretch at G146–G330 folds into the BPL/LPL catalytic domain. ATP contacts are provided by residues R188, G193–L196, and K249. K249 serves as a coordination point for (R)-lipoate.

The protein belongs to the LplA family. Monomer.

The catalysed reaction is L-lysyl-[lipoyl-carrier protein] + (R)-lipoate + ATP = N(6)-[(R)-lipoyl]-L-lysyl-[lipoyl-carrier protein] + AMP + diphosphate + H(+). It participates in protein modification; protein lipoylation via exogenous pathway; protein N(6)-(lipoyl)lysine from lipoate: step 1/2. It functions in the pathway protein modification; protein lipoylation via exogenous pathway; protein N(6)-(lipoyl)lysine from lipoate: step 2/2. Its function is as follows. Catalyzes both the ATP-dependent activation of exogenously supplied lipoate to lipoyl-AMP and the transfer of the activated lipoyl onto the lipoyl domains of lipoate-dependent enzymes. The chain is Putative lipoate-protein ligase A (AIM22) from Saccharomyces cerevisiae (strain ATCC 204508 / S288c) (Baker's yeast).